Reading from the N-terminus, the 185-residue chain is Threonylcarbamoyl-AMP synthase (185 aa).

The YrdC-like domain maps to 1–185; that stretch reads MKNFEQVLKA…AKTSQILRQG (185 aa). A disordered region spans residues 163–185; that stretch reads ETSGRNKPSEIRDAKTSQILRQG. Residues 164–177 show a composition bias toward basic and acidic residues; it reads TSGRNKPSEIRDAK.

Belongs to the SUA5 family. TsaC subfamily.

It is found in the cytoplasm. It catalyses the reaction L-threonine + hydrogencarbonate + ATP = L-threonylcarbamoyladenylate + diphosphate + H2O. Functionally, required for the formation of a threonylcarbamoyl group on adenosine at position 37 (t(6)A37) in tRNAs that read codons beginning with adenine. Catalyzes the conversion of L-threonine, HCO(3)(-)/CO(2) and ATP to give threonylcarbamoyl-AMP (TC-AMP) as the acyladenylate intermediate, with the release of diphosphate. The polypeptide is Threonylcarbamoyl-AMP synthase (Vibrio campbellii (strain ATCC BAA-1116)).